Here is an 86-residue protein sequence, read N- to C-terminus: Omega-theraphotoxin-Hhn1f 2 (86 aa).

The signal sequence occupies residues 1–21 (MKSIVFVALFGLALLAVVCSA). A propeptide spanning residues 22–50 (SEDAHKELLKEVVRAVVVDKTDAVQAEER) is cleaved from the precursor. Intrachain disulfides connect C52–C66, C59–C71, and C65–C78.

The protein belongs to the neurotoxin 10 (Hwtx-1) family. 17 (Hntx-9) subfamily. In terms of tissue distribution, expressed by the venom gland.

It localises to the secreted. Its function is as follows. Ion channel inhibitor. The sequence is that of Omega-theraphotoxin-Hhn1f 2 from Cyriopagopus hainanus (Chinese bird spider).